The following is a 365-amino-acid chain: MPNPLPLVFDAPRRAMPPRHFADLDESGRAAAVAELGLPAFRAKQLANQYYGRLIADPTQMTDLPAAVRERVADALFPTLFGAAREIECDSGETRKVLWRAVDGTTFESVLMRYPDRNTVCISSQAGCGMACPFCATGQGGLKRNLSTAEILEQVRAASAELRDRDGGRLSNVVFMGMGEPLANYNRVVAAVRRITASSPNGFGISARSVTVSTVGLAPAIRKLADEKLNVTLALSLHTPDDELRDTLVPVNNRWKVDEVLDAARYYADVTGRRVSIEYALIRDVNDQPWRADLLGKKLHGELGPLVHVNLIPLNPTPGSEWDASPKPVEREFVRRVRAKGVSCTVRDTRGREIAAACGQLAAEG.

The Proton acceptor role is filled by Glu-108. A Radical SAM core domain is found at 114 to 352 (YPDRNTVCIS…SCTVRDTRGR (239 aa)). The cysteines at positions 121 and 358 are disulfide-linked. 3 residues coordinate [4Fe-4S] cluster: Cys-128, Cys-132, and Cys-135. S-adenosyl-L-methionine contacts are provided by residues 179-180 (GE), Ser-213, 236-238 (SLH), and Asn-315. Cys-358 (S-methylcysteine intermediate) is an active-site residue.

The protein belongs to the radical SAM superfamily. RlmN family. It depends on [4Fe-4S] cluster as a cofactor.

It localises to the cytoplasm. It carries out the reaction adenosine(2503) in 23S rRNA + 2 reduced [2Fe-2S]-[ferredoxin] + 2 S-adenosyl-L-methionine = 2-methyladenosine(2503) in 23S rRNA + 5'-deoxyadenosine + L-methionine + 2 oxidized [2Fe-2S]-[ferredoxin] + S-adenosyl-L-homocysteine. It catalyses the reaction adenosine(37) in tRNA + 2 reduced [2Fe-2S]-[ferredoxin] + 2 S-adenosyl-L-methionine = 2-methyladenosine(37) in tRNA + 5'-deoxyadenosine + L-methionine + 2 oxidized [2Fe-2S]-[ferredoxin] + S-adenosyl-L-homocysteine. Functionally, specifically methylates position 2 of adenine 2503 in 23S rRNA and position 2 of adenine 37 in tRNAs. The polypeptide is Probable dual-specificity RNA methyltransferase RlmN (Mycolicibacterium vanbaalenii (strain DSM 7251 / JCM 13017 / BCRC 16820 / KCTC 9966 / NRRL B-24157 / PYR-1) (Mycobacterium vanbaalenii)).